Here is a 1252-residue protein sequence, read N- to C-terminus: LRR receptor-like serine/threonine-protein kinase GSO2 (1252 aa).

Residues Met-1–Gly-22 form the signal peptide. The Extracellular segment spans residues Gln-23–Val-876. Asn-62, Asn-77, and Asn-117 each carry an N-linked (GlcNAc...) asparagine glycan. LRR repeat units follow at residues Phe-94–Leu-118, Ser-120–Leu-143, Val-144–Asn-166, Val-168–Arg-190, Leu-191–Cys-215, Ser-217–Leu-239, Lys-240–Leu-263, Ser-265–Glu-286, Leu-287–Arg-310, and Asn-312–Asn-335. An N-linked (GlcNAc...) asparagine glycan is attached at Asn-157. N-linked (GlcNAc...) asparagine glycans are attached at residues Asn-214 and Asn-229. Asn-299 is a glycosylation site (N-linked (GlcNAc...) asparagine). Asn-336 carries N-linked (GlcNAc...) asparagine glycosylation. LRR repeat units lie at residues Thr-337–Cys-360, Gln-361–Leu-384, Glu-386–Leu-408, Thr-409–Gly-433, Leu-435–Cys-456, Thr-457–Leu-480, Lys-481–Cys-504, Gln-506–Leu-528, Thr-529–Leu-552, Asn-554–Ser-575, Ser-577–Ser-599, Thr-600–Lys-622, Ile-623–Lys-648, Leu-650–Lys-670, Leu-671–Leu-695, Asn-697–Leu-719, Gln-720–Leu-743, Lys-745–Leu-767, Gln-768–Leu-792, Pro-793–Met-816, and Ser-818–Arg-839. N-linked (GlcNAc...) asparagine glycans are attached at residues Asn-370, Asn-394, and Asn-407. Asn-455 carries N-linked (GlcNAc...) asparagine glycosylation. Asn-538, Asn-554, Asn-559, and Asn-566 each carry an N-linked (GlcNAc...) asparagine glycan. Residue Asn-709 is glycosylated (N-linked (GlcNAc...) asparagine). N-linked (GlcNAc...) asparagine glycosylation is present at Asn-780. Residue Asn-823 is glycosylated (N-linked (GlcNAc...) asparagine). Residues Ile-877–Phe-897 traverse the membrane as a helical segment. The Cytoplasmic portion of the chain corresponds to Phe-898–Lys-1252. At Thr-945 the chain carries Phosphothreonine. Residues Leu-948–Leu-1232 enclose the Protein kinase domain. ATP-binding positions include Ile-954 to Val-962 and Lys-976. 2 positions are modified to phosphotyrosine: Tyr-1024 and Tyr-1066. Residue Asp-1079 is the Proton acceptor of the active site. Residue Ser-1114 is modified to Phosphoserine. Residues Tyr-1124 and Tyr-1131 each carry the phosphotyrosine modification.

Belongs to the protein kinase superfamily. Ser/Thr protein kinase family. As to quaternary structure, interacts with CIF1 and CIF2. As to expression, mostly expressed in siliques, seeds, developing embryos and seedlings, detected in flower buds, but not in roots, leaves or stems.

It localises to the cell membrane. The enzyme catalyses L-seryl-[protein] + ATP = O-phospho-L-seryl-[protein] + ADP + H(+). It carries out the reaction L-threonyl-[protein] + ATP = O-phospho-L-threonyl-[protein] + ADP + H(+). Functionally, together with GSO1, receptor-like serine/threonine-kinase required during the development of the epidermal surface in embryos and cotyledons. Involved in the nuclear division phase of megagametogenesis. In coordination with GSO2, regulates root growth through control of cell division and cell fate specification. Controls seedling root growth by modulating sucrose response after germination. Receptor of the peptide hormones CIF1 and CIF2 required for contiguous Casparian strip diffusion barrier formation in roots. This Arabidopsis thaliana (Mouse-ear cress) protein is LRR receptor-like serine/threonine-protein kinase GSO2.